A 216-amino-acid polypeptide reads, in one-letter code: 3-isopropylmalate dehydratase small subunit 2 (216 aa).

It belongs to the LeuD family. LeuD type 1 subfamily. As to quaternary structure, heterodimer of LeuC and LeuD.

It carries out the reaction (2R,3S)-3-isopropylmalate = (2S)-2-isopropylmalate. It participates in amino-acid biosynthesis; L-leucine biosynthesis; L-leucine from 3-methyl-2-oxobutanoate: step 2/4. In terms of biological role, catalyzes the isomerization between 2-isopropylmalate and 3-isopropylmalate, via the formation of 2-isopropylmaleate. The sequence is that of 3-isopropylmalate dehydratase small subunit 2 from Bordetella pertussis (strain Tohama I / ATCC BAA-589 / NCTC 13251).